A 194-amino-acid polypeptide reads, in one-letter code: MQLLKDRIRKDGIVKQGNVLKVDSFLNHQMDIELINEIGKEFKRLFEKEKITKILTIEASGIGIACIVAQYFNVPVVFAKKAQSINIEGEVFATKIESFTHKKTYDVIVSKKFLKPSDRVLIIDDFLANGCALVGLIDLVISSGASVEGIGIVIEKGFQSGGEIIREMGIHLESLAIVDSMNAEDGTVVFRGDK.

2 residues coordinate xanthine: Leu-20 and Asn-27. 128-132 provides a ligand contact to 5-phospho-alpha-D-ribose 1-diphosphate; sequence ANGCA. A xanthine-binding site is contributed by Lys-156.

The protein belongs to the purine/pyrimidine phosphoribosyltransferase family. Xpt subfamily. In terms of assembly, homodimer.

The protein localises to the cytoplasm. The enzyme catalyses XMP + diphosphate = xanthine + 5-phospho-alpha-D-ribose 1-diphosphate. Its pathway is purine metabolism; XMP biosynthesis via salvage pathway; XMP from xanthine: step 1/1. Converts the preformed base xanthine, a product of nucleic acid breakdown, to xanthosine 5'-monophosphate (XMP), so it can be reused for RNA or DNA synthesis. In Lachnoclostridium phytofermentans (strain ATCC 700394 / DSM 18823 / ISDg) (Clostridium phytofermentans), this protein is Xanthine phosphoribosyltransferase.